A 294-amino-acid chain; its full sequence is 33 kDa chaperonin (294 aa).

Cystine bridges form between Cys238–Cys240 and Cys271–Cys274.

The protein belongs to the HSP33 family. Post-translationally, under oxidizing conditions two disulfide bonds are formed involving the reactive cysteines. Under reducing conditions zinc is bound to the reactive cysteines and the protein is inactive.

It localises to the cytoplasm. Functionally, redox regulated molecular chaperone. Protects both thermally unfolding and oxidatively damaged proteins from irreversible aggregation. Plays an important role in the bacterial defense system toward oxidative stress. In Clostridium novyi (strain NT), this protein is 33 kDa chaperonin.